The primary structure comprises 314 residues: MIIVTGGAGMIGSNIIKALNERGITDILVVDHLKNGRKFKNLVDLQIADYMDRDDFLAQIMAGDDFGFIDAIFHEGACSATTEWDGKYVMLNNYEYSKELLHYCLDREIPFLYASSAATYGETDTFIEEPQYEGALNVYGYSKQQFDNYVRRLWLDAKQHDETLSQITGFRYFNVYGPREQHKGSMASVAFHLNNQMNAGENPKLFAGSENFKRDFVYVGDVAAVNLWFLDHGVSGIFNCGTGKAESFNEVAKAVIAFHGRGEVETIPFPDHLKGAYQEFTEADLTKLRAAGCDVQFKSVAEGVAEYMALINRK.

NADP(+)-binding positions include 10–11 (MI), 31–32 (DH), K38, R53, 75–79 (EGACS), and N92. Y139 functions as the Proton acceptor in the catalytic mechanism. K143 serves as a coordination point for NADP(+). A substrate-binding site is contributed by N174. NADP(+) contacts are provided by V175 and K183. K183 acts as the Proton acceptor in catalysis. Residues S185, H192, 206–209 (FAGS), R214, and Y277 contribute to the substrate site.

Belongs to the NAD(P)-dependent epimerase/dehydratase family. HldD subfamily. As to quaternary structure, homopentamer. Requires NADP(+) as cofactor.

It carries out the reaction ADP-D-glycero-beta-D-manno-heptose = ADP-L-glycero-beta-D-manno-heptose. It functions in the pathway nucleotide-sugar biosynthesis; ADP-L-glycero-beta-D-manno-heptose biosynthesis; ADP-L-glycero-beta-D-manno-heptose from D-glycero-beta-D-manno-heptose 7-phosphate: step 4/4. Functionally, catalyzes the interconversion between ADP-D-glycero-beta-D-manno-heptose and ADP-L-glycero-beta-D-manno-heptose via an epimerization at carbon 6 of the heptose. This is ADP-L-glycero-D-manno-heptose-6-epimerase from Vibrio cholerae serotype O1 (strain ATCC 39541 / Classical Ogawa 395 / O395).